Consider the following 61-residue polypeptide: Small ribosomal subunit protein uS14 (61 aa).

Residues cysteine 24, cysteine 27, cysteine 40, and cysteine 43 each contribute to the Zn(2+) site.

This sequence belongs to the universal ribosomal protein uS14 family. Zinc-binding uS14 subfamily. In terms of assembly, part of the 30S ribosomal subunit. Contacts proteins S3 and S10. Requires Zn(2+) as cofactor.

Its function is as follows. Binds 16S rRNA, required for the assembly of 30S particles and may also be responsible for determining the conformation of the 16S rRNA at the A site. In Pseudothermotoga lettingae (strain ATCC BAA-301 / DSM 14385 / NBRC 107922 / TMO) (Thermotoga lettingae), this protein is Small ribosomal subunit protein uS14.